We begin with the raw amino-acid sequence, 636 residues long: 1-deoxy-D-xylulose-5-phosphate synthase (636 aa).

Thiamine diphosphate-binding positions include H74 and 115-117 (GHA). D146 lines the Mg(2+) pocket. Thiamine diphosphate contacts are provided by residues 147-148 (GA), N175, Y285, and E368. N175 lines the Mg(2+) pocket.

It belongs to the transketolase family. DXPS subfamily. Homodimer. Requires Mg(2+) as cofactor. It depends on thiamine diphosphate as a cofactor.

It catalyses the reaction D-glyceraldehyde 3-phosphate + pyruvate + H(+) = 1-deoxy-D-xylulose 5-phosphate + CO2. Its pathway is metabolic intermediate biosynthesis; 1-deoxy-D-xylulose 5-phosphate biosynthesis; 1-deoxy-D-xylulose 5-phosphate from D-glyceraldehyde 3-phosphate and pyruvate: step 1/1. Functionally, catalyzes the acyloin condensation reaction between C atoms 2 and 3 of pyruvate and glyceraldehyde 3-phosphate to yield 1-deoxy-D-xylulose-5-phosphate (DXP). The sequence is that of 1-deoxy-D-xylulose-5-phosphate synthase from Anaeromyxobacter dehalogenans (strain 2CP-1 / ATCC BAA-258).